The primary structure comprises 77 residues: Sec-independent protein translocase protein TatA (77 aa).

Residues 3-23 (VFGIGLPELIVILVVALLIFG) form a helical membrane-spanning segment. The tract at residues 56-77 (TAALEEEQQAKAEAESPREISP) is disordered. Basic and acidic residues predominate over residues 63–77 (QQAKAEAESPREISP).

Belongs to the TatA/E family. Forms a complex with TatC.

The protein resides in the cell inner membrane. In terms of biological role, part of the twin-arginine translocation (Tat) system that transports large folded proteins containing a characteristic twin-arginine motif in their signal peptide across membranes. TatA could form the protein-conducting channel of the Tat system. The polypeptide is Sec-independent protein translocase protein TatA (Thermosynechococcus vestitus (strain NIES-2133 / IAM M-273 / BP-1)).